The primary structure comprises 460 residues: Bifunctional protein GlmU (460 aa).

A pyrophosphorylase region spans residues M1–R235. Residues L9 to G12, K23, Q76, and G81 to T82 each bind UDP-N-acetyl-alpha-D-glucosamine. D109 contributes to the Mg(2+) binding site. 4 residues coordinate UDP-N-acetyl-alpha-D-glucosamine: G146, E161, N176, and N233. N233 contacts Mg(2+). Residues V236 to D256 form a linker region. Positions G257–R460 are N-acetyltransferase. R338 and K356 together coordinate UDP-N-acetyl-alpha-D-glucosamine. H368 serves as the catalytic Proton acceptor. UDP-N-acetyl-alpha-D-glucosamine-binding residues include Y371 and N382. Residues N391 to Y392 and A428 each bind acetyl-CoA.

The protein in the N-terminal section; belongs to the N-acetylglucosamine-1-phosphate uridyltransferase family. This sequence in the C-terminal section; belongs to the transferase hexapeptide repeat family. In terms of assembly, homotrimer. The cofactor is Mg(2+).

The protein resides in the cytoplasm. It catalyses the reaction alpha-D-glucosamine 1-phosphate + acetyl-CoA = N-acetyl-alpha-D-glucosamine 1-phosphate + CoA + H(+). The catalysed reaction is N-acetyl-alpha-D-glucosamine 1-phosphate + UTP + H(+) = UDP-N-acetyl-alpha-D-glucosamine + diphosphate. The protein operates within nucleotide-sugar biosynthesis; UDP-N-acetyl-alpha-D-glucosamine biosynthesis; N-acetyl-alpha-D-glucosamine 1-phosphate from alpha-D-glucosamine 6-phosphate (route II): step 2/2. It participates in nucleotide-sugar biosynthesis; UDP-N-acetyl-alpha-D-glucosamine biosynthesis; UDP-N-acetyl-alpha-D-glucosamine from N-acetyl-alpha-D-glucosamine 1-phosphate: step 1/1. It functions in the pathway bacterial outer membrane biogenesis; LPS lipid A biosynthesis. In terms of biological role, catalyzes the last two sequential reactions in the de novo biosynthetic pathway for UDP-N-acetylglucosamine (UDP-GlcNAc). The C-terminal domain catalyzes the transfer of acetyl group from acetyl coenzyme A to glucosamine-1-phosphate (GlcN-1-P) to produce N-acetylglucosamine-1-phosphate (GlcNAc-1-P), which is converted into UDP-GlcNAc by the transfer of uridine 5-monophosphate (from uridine 5-triphosphate), a reaction catalyzed by the N-terminal domain. This chain is Bifunctional protein GlmU, found in Bifidobacterium longum (strain DJO10A).